We begin with the raw amino-acid sequence, 300 residues long: Dipeptide transport system permease protein DppC (300 aa).

Topologically, residues methionine 1–glycine 31 are cytoplasmic. A helical membrane pass occupies residues alanine 32–isoleucine 52. The Periplasmic segment spans residues alanine 53 to serine 101. The 190-residue stretch at alanine 98 to glycine 287 folds into the ABC transmembrane type-1 domain. A helical transmembrane segment spans residues leucine 102 to isoleucine 122. Topologically, residues alanine 123–arginine 136 are cytoplasmic. Residues valine 137–phenylalanine 157 form a helical membrane-spanning segment. Over glycine 158–glutamine 206 the chain is Periplasmic. Residues methionine 207–phenylalanine 227 traverse the membrane as a helical segment. Topologically, residues serine 228 to alanine 230 are cytoplasmic. A helical membrane pass occupies residues isoleucine 231 to tryptophan 251. The Periplasmic segment spans residues glycine 252–alanine 265. Residues tryptophan 266–methionine 286 traverse the membrane as a helical segment. Residues glycine 287 to glutamine 300 lie on the Cytoplasmic side of the membrane.

The protein belongs to the binding-protein-dependent transport system permease family. OppBC subfamily. In terms of assembly, the complex is composed of two ATP-binding proteins (DppD and DppF), two transmembrane proteins (DppB and DppC) and a solute-binding protein (DppA).

The protein localises to the cell inner membrane. Functionally, part of the ABC transporter DppABCDF involved in dipeptide transport. Responsible for the translocation of the substrate across the membrane. The protein is Dipeptide transport system permease protein DppC (dppC) of Escherichia coli O157:H7.